We begin with the raw amino-acid sequence, 609 residues long: Arginine--tRNA ligase (609 aa).

The 'HIGH' region motif lies at 132 to 142; the sequence is ANPTSSLHVGH.

The protein belongs to the class-I aminoacyl-tRNA synthetase family. As to quaternary structure, monomer.

The protein localises to the cytoplasm. The catalysed reaction is tRNA(Arg) + L-arginine + ATP = L-arginyl-tRNA(Arg) + AMP + diphosphate. The protein is Arginine--tRNA ligase of Psychrobacter sp. (strain PRwf-1).